Here is a 243-residue protein sequence, read N- to C-terminus: NAD(P)H-quinone oxidoreductase subunit K, chloroplastic (243 aa).

4 residues coordinate [4Fe-4S] cluster: Cys-65, Cys-66, Cys-130, and Cys-161.

Belongs to the complex I 20 kDa subunit family. As to quaternary structure, NDH is composed of at least 16 different subunits, 5 of which are encoded in the nucleus. [4Fe-4S] cluster serves as cofactor.

Its subcellular location is the plastid. It is found in the chloroplast thylakoid membrane. It catalyses the reaction a plastoquinone + NADH + (n+1) H(+)(in) = a plastoquinol + NAD(+) + n H(+)(out). The catalysed reaction is a plastoquinone + NADPH + (n+1) H(+)(in) = a plastoquinol + NADP(+) + n H(+)(out). In terms of biological role, NDH shuttles electrons from NAD(P)H:plastoquinone, via FMN and iron-sulfur (Fe-S) centers, to quinones in the photosynthetic chain and possibly in a chloroplast respiratory chain. The immediate electron acceptor for the enzyme in this species is believed to be plastoquinone. Couples the redox reaction to proton translocation, and thus conserves the redox energy in a proton gradient. This chain is NAD(P)H-quinone oxidoreductase subunit K, chloroplastic, found in Marchantia polymorpha (Common liverwort).